The sequence spans 130 residues: Profilin-12 (130 aa).

Cys13 and Cys115 are joined by a disulfide. Positions 81–97 match the Involved in PIP2 interaction motif; that stretch reads AVIRGKKGSGGITVKKT. The residue at position 111 (Thr111) is a Phosphothreonine.

This sequence belongs to the profilin family. In terms of assembly, occurs in many kinds of cells as a complex with monomeric actin in a 1:1 ratio. In terms of processing, phosphorylated by MAP kinases.

It localises to the cytoplasm. Its subcellular location is the cytoskeleton. Functionally, binds to actin and affects the structure of the cytoskeleton. At high concentrations, profilin prevents the polymerization of actin, whereas it enhances it at low concentrations. In Zea mays (Maize), this protein is Profilin-12.